Reading from the N-terminus, the 369-residue chain is p21-activated protein kinase-interacting protein 1-like (369 aa).

WD repeat units lie at residues 33–70 (AHTA…EHGA), 73–111 (QHNG…CLKS), 114–153 (AHKG…SAFI), 195–233 (TIEK…CLCE), and 236–278 (AREN…NNVP). Residues 311–369 (ATSTEANESEKPSAVKKKKVCGMNKSGKLTKQRRRIVPAKRKLEAPLQKKKKKKQNSSE) form a disordered region. Composition is skewed to basic residues over residues 338–350 (KLTK…VPAK) and 358–369 (QKKKKKKQNSSE).

The protein resides in the nucleus. It localises to the nucleolus. Negatively regulates the PAK1 kinase. PAK1 is a member of the PAK kinase family, which has been shown to play a positive role in the regulation of signaling pathways involving MAPK8 and RELA. PAK1 exists as an inactive homodimer, which is activated by binding of small GTPases such as CDC42 to an N-terminal regulatory domain. PAK1IP1 also binds to the N-terminus of PAK1, and inhibits the specific activation of PAK1 by CDC42. May be involved in ribosomal large subunit assembly. The polypeptide is p21-activated protein kinase-interacting protein 1-like (PAK1IP1) (Gallus gallus (Chicken)).